The following is a 668-amino-acid chain: Kelch repeat-containing protein ARB_01230 (668 aa).

The N-terminal stretch at 1–32 is a signal peptide; sequence MEVGRFASKSASMTYLLLVLLVGFILPQQGQH. The Extracellular portion of the chain corresponds to 33–522; it reads AHARTLARRD…GSGSDGPNIA (490 aa). Asparagine 60 is a glycosylation site (N-linked (GlcNAc...) asparagine). 2 Kelch repeats span residues 62-108 and 125-176; these read TLYI…PRGD and SLFL…ANIP. Asparagine 251 and asparagine 291 each carry an N-linked (GlcNAc...) asparagine glycan. 4 Kelch repeats span residues 283 to 331, 340 to 395, 396 to 445, and 463 to 509; these read ILGL…AVAA, QVYL…IWNS, QIVV…ASQT, and VQSV…GPHA. The helical transmembrane segment at 523–543 threads the bilayer; sequence AIVAGVIAGCLGVLAIYLGFV. At 544 to 668 the chain is on the cytoplasmic side; that stretch reads TWLYRRRLAI…PRQTLRVINQ (125 aa). A disordered region spans residues 611 to 642; the sequence is DNQRHNHTRSSSGGNFDHLAQPERPSTSSSVE.

The protein localises to the membrane. The protein resides in the secreted. This is Kelch repeat-containing protein ARB_01230 from Arthroderma benhamiae (strain ATCC MYA-4681 / CBS 112371) (Trichophyton mentagrophytes).